Here is a 362-residue protein sequence, read N- to C-terminus: ATPase ARSA2 (362 aa).

ATP is bound at residue 27-34 (KGGVGKTT). Residue aspartate 58 is part of the active site. ATP-binding residues include glutamate 235 and asparagine 262.

It belongs to the arsA ATPase family. Homodimer. Interacts with SEC61B.

It localises to the cytoplasm. The protein localises to the cytosol. It is found in the endoplasmic reticulum. ATPase required for the post-translational delivery of tail-anchored (TA) proteins to the endoplasmic reticulum. Recognizes and selectively binds the transmembrane domain of TA proteins in the cytosol. This complex then targets to the endoplasmic reticulum by membrane-bound receptors, where the tail-anchored protein is released for insertion. This process is regulated by ATP binding and hydrolysis. ATP binding drives the homodimer towards the closed dimer state, facilitating recognition of newly synthesized TA membrane proteins. ATP hydrolysis is required for insertion. Subsequently, the homodimer reverts towards the open dimer state, lowering its affinity for the membrane-bound receptor, and returning it to the cytosol to initiate a new round of targeting. The sequence is that of ATPase ARSA2 from Chlamydomonas reinhardtii (Chlamydomonas smithii).